The sequence spans 215 residues: Ribonuclease T (215 aa).

The Exonuclease domain occupies 20–194 (VVIDVETAGF…YDTLQTAKLF (175 aa)). Residues aspartate 23, glutamate 25, histidine 181, and aspartate 186 each coordinate Mg(2+). Catalysis depends on histidine 181, which acts as the Proton donor/acceptor.

It belongs to the RNase T family. As to quaternary structure, homodimer. It depends on Mg(2+) as a cofactor.

Its function is as follows. Trims short 3' overhangs of a variety of RNA species, leaving a one or two nucleotide 3' overhang. Responsible for the end-turnover of tRNA: specifically removes the terminal AMP residue from uncharged tRNA (tRNA-C-C-A). Also appears to be involved in tRNA biosynthesis. In Yersinia pseudotuberculosis serotype O:1b (strain IP 31758), this protein is Ribonuclease T.